The sequence spans 344 residues: Molybdate/tungstate import ATP-binding protein WtpC (344 aa).

An ABC transporter domain is found at 2-231; sequence LRVESVSKDY…PVDEGVARFL (230 aa). ATP is bound at residue 33–40; the sequence is GPSGAGKT. Residues 280 to 344 enclose the Mop domain; sequence KTSARNEFRA…SFKTSAIKVF (65 aa).

The protein belongs to the ABC transporter superfamily. Sulfate/tungstate importer (TC 3.A.1.6) family. In terms of assembly, the complex is composed of two ATP-binding proteins (WtpC), two transmembrane proteins (WtpB) and a solute-binding protein (WtpA).

Its subcellular location is the cell membrane. The catalysed reaction is tungstate(in) + ATP + H2O = tungstate(out) + ADP + phosphate + H(+). Part of the ABC transporter complex WtpABC involved in molybdate/tungstate import. Responsible for energy coupling to the transport system. This is Molybdate/tungstate import ATP-binding protein WtpC (wtpC) from Pyrococcus abyssi (strain GE5 / Orsay).